We begin with the raw amino-acid sequence, 355 residues long: 3-isopropylmalate dehydrogenase (355 aa).

Substrate contacts are provided by Arg-90, Arg-100, Arg-128, and Asp-222. Residues Asp-222, Asp-246, and Asp-250 each coordinate Mg(2+). NAD(+) is bound at residue 280–292 (GSAPDIAGKGIAN).

It belongs to the isocitrate and isopropylmalate dehydrogenases family. LeuB type 1 subfamily. In terms of assembly, homodimer. It depends on Mg(2+) as a cofactor. Mn(2+) serves as cofactor.

The protein resides in the cytoplasm. It carries out the reaction (2R,3S)-3-isopropylmalate + NAD(+) = 4-methyl-2-oxopentanoate + CO2 + NADH. It participates in amino-acid biosynthesis; L-leucine biosynthesis; L-leucine from 3-methyl-2-oxobutanoate: step 3/4. Functionally, catalyzes the oxidation of 3-carboxy-2-hydroxy-4-methylpentanoate (3-isopropylmalate) to 3-carboxy-4-methyl-2-oxopentanoate. The product decarboxylates to 4-methyl-2 oxopentanoate. The polypeptide is 3-isopropylmalate dehydrogenase (Burkholderia lata (strain ATCC 17760 / DSM 23089 / LMG 22485 / NCIMB 9086 / R18194 / 383)).